We begin with the raw amino-acid sequence, 116 residues long: Large ribosomal subunit protein bL19 (116 aa).

It belongs to the bacterial ribosomal protein bL19 family.

This protein is located at the 30S-50S ribosomal subunit interface and may play a role in the structure and function of the aminoacyl-tRNA binding site. This is Large ribosomal subunit protein bL19 from Solidesulfovibrio magneticus (strain ATCC 700980 / DSM 13731 / RS-1) (Desulfovibrio magneticus).